Reading from the N-terminus, the 40-residue chain is Photosystem II reaction center protein J (40 aa).

A helical transmembrane segment spans residues 8–28 (IPLWLIGTVTGIIVIGLIGIF).

The protein belongs to the PsbJ family. PSII is composed of 1 copy each of membrane proteins PsbA, PsbB, PsbC, PsbD, PsbE, PsbF, PsbH, PsbI, PsbJ, PsbK, PsbL, PsbM, PsbT, PsbX, PsbY, PsbZ, Psb30/Ycf12, at least 3 peripheral proteins of the oxygen-evolving complex and a large number of cofactors. It forms dimeric complexes.

The protein resides in the plastid. Its subcellular location is the chloroplast thylakoid membrane. Functionally, one of the components of the core complex of photosystem II (PSII). PSII is a light-driven water:plastoquinone oxidoreductase that uses light energy to abstract electrons from H(2)O, generating O(2) and a proton gradient subsequently used for ATP formation. It consists of a core antenna complex that captures photons, and an electron transfer chain that converts photonic excitation into a charge separation. In Piper cenocladum (Ant piper), this protein is Photosystem II reaction center protein J.